The primary structure comprises 494 residues: uncharacterized protein (494 aa).

Positions 4-82 constitute a 2Fe-2S ferredoxin-type domain; it reads FTITVKKTEG…NMIIEPLEGF (79 aa). Residues Cys-46, Cys-51, Cys-54, and Cys-66 each contribute to the [2Fe-2S] cluster site. 4Fe-4S ferredoxin-type domains are found at residues 127-157 and 178-208; these read DLKD…NYPG and EKEA…IVHN. 8 residues coordinate [4Fe-4S] cluster: Cys-137, Cys-140, Cys-143, Cys-147, Cys-189, Cys-192, Cys-195, and Cys-199.

This sequence belongs to the succinate dehydrogenase/fumarate reductase iron-sulfur protein family.

This is an uncharacterized protein from Methanococcus maripaludis (strain DSM 14266 / JCM 13030 / NBRC 101832 / S2 / LL).